The primary structure comprises 375 residues: Holliday junction branch migration complex subunit RuvB (375 aa).

The interval 1 to 50 is disordered; that stretch reads MAIVSSKSPDPAERRSQAKTKPSVSEPQDSLVRPQAAPEESQRPEDQIRP. The interval 13–209 is large ATPase domain (RuvB-L); the sequence is ERRSQAKTKP…FGLVQRLRFY (197 aa). Polar residues predominate over residues 19–28; it reads KTKPSVSEPQ. The span at 40-49 shows a compositional bias: basic and acidic residues; the sequence is ESQRPEDQIR. ATP contacts are provided by residues I48, R49, G90, K93, T94, T95, 156 to 158, R199, Y209, and R246; that span reads EDF. Mg(2+) is bound at residue T94. A small ATPAse domain (RuvB-S) region spans residues 210-280; it reads EVEALTDIVQ…IAATALELYN (71 aa). Residues 283–375 are head domain (RuvB-H); it reads PCGLDWTDRR…LQQLLTEPET (93 aa). 2 residues coordinate DNA: R338 and R343.

This sequence belongs to the RuvB family. In terms of assembly, homohexamer. Forms an RuvA(8)-RuvB(12)-Holliday junction (HJ) complex. HJ DNA is sandwiched between 2 RuvA tetramers; dsDNA enters through RuvA and exits via RuvB. An RuvB hexamer assembles on each DNA strand where it exits the tetramer. Each RuvB hexamer is contacted by two RuvA subunits (via domain III) on 2 adjacent RuvB subunits; this complex drives branch migration. In the full resolvosome a probable DNA-RuvA(4)-RuvB(12)-RuvC(2) complex forms which resolves the HJ.

It is found in the cytoplasm. The catalysed reaction is ATP + H2O = ADP + phosphate + H(+). Its function is as follows. The RuvA-RuvB-RuvC complex processes Holliday junction (HJ) DNA during genetic recombination and DNA repair, while the RuvA-RuvB complex plays an important role in the rescue of blocked DNA replication forks via replication fork reversal (RFR). RuvA specifically binds to HJ cruciform DNA, conferring on it an open structure. The RuvB hexamer acts as an ATP-dependent pump, pulling dsDNA into and through the RuvAB complex. RuvB forms 2 homohexamers on either side of HJ DNA bound by 1 or 2 RuvA tetramers; 4 subunits per hexamer contact DNA at a time. Coordinated motions by a converter formed by DNA-disengaged RuvB subunits stimulates ATP hydrolysis and nucleotide exchange. Immobilization of the converter enables RuvB to convert the ATP-contained energy into a lever motion, pulling 2 nucleotides of DNA out of the RuvA tetramer per ATP hydrolyzed, thus driving DNA branch migration. The RuvB motors rotate together with the DNA substrate, which together with the progressing nucleotide cycle form the mechanistic basis for DNA recombination by continuous HJ branch migration. Branch migration allows RuvC to scan DNA until it finds its consensus sequence, where it cleaves and resolves cruciform DNA. The protein is Holliday junction branch migration complex subunit RuvB of Synechococcus elongatus (strain ATCC 33912 / PCC 7942 / FACHB-805) (Anacystis nidulans R2).